The primary structure comprises 741 residues: uncharacterized protein (741 aa).

Residues 1-22 form the signal peptide; it reads MKSVKIIIILALALLIQISHIA.

This is an uncharacterized protein from Archaeoglobus fulgidus (strain ATCC 49558 / DSM 4304 / JCM 9628 / NBRC 100126 / VC-16).